The following is a 396-amino-acid chain: Calsequestrin-1 (396 aa).

A signal peptide spans 1–34; that stretch reads MSATDRMGPRAVPGLRLALLLLLVLGTPKSGVQG. Y43 is modified (phosphotyrosine). S81 is modified (phosphoserine). A Phosphothreonine modification is found at T124. Position 216 is a phosphoserine (S216). The N-linked (GlcNAc...) asparagine glycan is linked to N350.

The protein belongs to the calsequestrin family. As to quaternary structure, monomer; increases in response to a depletion of intracellular calcium. Homodimer. Homotetramer and homopolymer. Can form linear homooligomers. Ca(2+) ions promote oligomerization. Interacts (via C-terminal end and preferentially with the monomeric form) with STIM1; this interaction increases in response to a depletion of intracellular calcium, decreases both STIM1 aggregation and clustering, interaction of STIM1 with ORAI1 and store-operated Ca(2+) entry (SOCE) activity. Interacts with ASPH and TRDN. Post-translationally, N-glycosylated. As to expression, expressed in myoblasts (at protein level).

It localises to the endoplasmic reticulum. The protein resides in the sarcoplasmic reticulum. It is found in the sarcoplasmic reticulum lumen. Its subcellular location is the sarcoplasmic reticulum membrane. The protein localises to the mitochondrion matrix. Calsequestrin is a high-capacity, moderate affinity, calcium-binding protein and thus acts as an internal calcium store in muscle. Calcium ions are bound by clusters of acidic residues at the protein surface, often at the interface between subunits. Can bind around 80 Ca(2+) ions. Regulates the release of lumenal Ca(2+) via the calcium release channel RYR1; this plays an important role in triggering muscle contraction. Negatively regulates store-operated Ca(2+) entry (SOCE) activity. In Homo sapiens (Human), this protein is Calsequestrin-1 (CASQ1).